Consider the following 181-residue polypeptide: Bifunctional protein PyrR (181 aa).

Substrate contacts are provided by residues 41-42, Arg-82, Arg-86, 103-111, Arg-136, and Val-160; these read TR and DDVLYTGRT. A PRPP-binding motif is present at residues 99 to 111; it reads IVLVDDVLYTGRT.

Belongs to the purine/pyrimidine phosphoribosyltransferase family. PyrR subfamily.

The enzyme catalyses UMP + diphosphate = 5-phospho-alpha-D-ribose 1-diphosphate + uracil. Probably regulates transcriptional attenuation of the pyrimidine nucleotide (pyr) operon in response to exogenous pyrimidines. In contrast to pyr attenuation in Bacillus, PyrR from Thermus could act as a translational repressor: the binding of PyrR at its proposed recognition site in the transcript would prevent initiation of translation of the leader peptide, resulting in terminator formation and reduced expression of downstream genes. Also displays uracil phosphoribosyltransferase activity. The polypeptide is Bifunctional protein PyrR (pyrR) (Thermus thermophilus (strain ATCC BAA-163 / DSM 7039 / HB27)).